A 574-amino-acid polypeptide reads, in one-letter code: 5'-nucleotidase (574 aa).

Residues 1–26 form the signal peptide; the sequence is MCPRAARAPATLLLALGAVLWPAAGA. The Zn(2+) site is built by D36 and H38. The cysteines at positions 51 and 57 are disulfide-linked. N53 carries an N-linked (GlcNAc...) asparagine glycan. Zn(2+)-binding residues include D85, N117, H220, and H243. N-linked (GlcNAc...) asparagine glycosylation is found at N311 and N333. 2 disulfides stabilise this stretch: C353-C358 and C365-C387. R354 provides a ligand contact to AMP. Residue R354 participates in IMP binding. AMP is bound by residues N390 and R395. IMP is bound by residues N390 and R395. N-linked (GlcNAc...) asparagine glycosylation occurs at N403. F417 is an AMP binding site. Position 417 (F417) interacts with IMP. An intrachain disulfide couples C476 to C479. AMP-binding residues include F500 and D506. Positions 500 and 506 each coordinate IMP. A lipid anchor (GPI-anchor amidated serine) is attached at S549. The propeptide at 550 to 574 is removed in mature form; sequence TGSHCHGSFSLIFLSLWAVIFVLYQ.

It belongs to the 5'-nucleotidase family. In terms of assembly, homodimer. It depends on Zn(2+) as a cofactor.

It is found in the cell membrane. The enzyme catalyses a ribonucleoside 5'-phosphate + H2O = a ribonucleoside + phosphate. It catalyses the reaction a 2'-deoxyribonucleoside 5'-phosphate + H2O = a 2'-deoxyribonucleoside + phosphate. The catalysed reaction is dTMP + H2O = thymidine + phosphate. It carries out the reaction CMP + H2O = cytidine + phosphate. The enzyme catalyses IMP + H2O = inosine + phosphate. It catalyses the reaction AMP + H2O = adenosine + phosphate. The catalysed reaction is GMP + H2O = guanosine + phosphate. It carries out the reaction UMP + H2O = uridine + phosphate. The enzyme catalyses dAMP + H2O = 2'-deoxyadenosine + phosphate. It catalyses the reaction dCMP + H2O = 2'-deoxycytidine + phosphate. Inhibited by adenosine 5'-(alpha,beta-methylene)-diphosphate (AMPCP). In terms of biological role, catalyzes the hydrolysis of nucleotide monophosphates, releasing inorganic phosphate and the corresponding nucleoside, with AMP being the preferred substrate. Shows a preference for ribonucleotide monophosphates over their equivalent deoxyribose forms. Other substrates include IMP, UMP, GMP, CMP, dAMP, dCMP, dTMP, NAD and NMN. This Homo sapiens (Human) protein is 5'-nucleotidase (NT5E).